We begin with the raw amino-acid sequence, 360 residues long: Aminomethyltransferase (360 aa).

Belongs to the GcvT family. In terms of assembly, the glycine cleavage system is composed of four proteins: P, T, L and H.

The enzyme catalyses N(6)-[(R)-S(8)-aminomethyldihydrolipoyl]-L-lysyl-[protein] + (6S)-5,6,7,8-tetrahydrofolate = N(6)-[(R)-dihydrolipoyl]-L-lysyl-[protein] + (6R)-5,10-methylene-5,6,7,8-tetrahydrofolate + NH4(+). In terms of biological role, the glycine cleavage system catalyzes the degradation of glycine. This is Aminomethyltransferase from Exiguobacterium sibiricum (strain DSM 17290 / CCUG 55495 / CIP 109462 / JCM 13490 / 255-15).